A 181-amino-acid polypeptide reads, in one-letter code: Epidermin decarboxylase (181 aa).

His-67 is a catalytic residue.

This sequence belongs to the HFCD (homooligomeric flavin containing Cys decarboxylase) superfamily. In terms of assembly, homododecamer. The cofactor is FMN.

Functionally, catalyzes the removal of two reducing equivalents (oxidative decarboxylation) from the cysteine residue of the C-terminal meso-lanthionine of epidermin to form a --C==C-- double bond. The chain is Epidermin decarboxylase (epiD) from Staphylococcus epidermidis.